Here is a 279-residue protein sequence, read N- to C-terminus: Ribosomal RNA small subunit methyltransferase A (279 aa).

Positions 25, 27, 52, 73, 98, and 120 each coordinate S-adenosyl-L-methionine.

It belongs to the class I-like SAM-binding methyltransferase superfamily. rRNA adenine N(6)-methyltransferase family. RsmA subfamily.

The protein resides in the cytoplasm. It catalyses the reaction adenosine(1518)/adenosine(1519) in 16S rRNA + 4 S-adenosyl-L-methionine = N(6)-dimethyladenosine(1518)/N(6)-dimethyladenosine(1519) in 16S rRNA + 4 S-adenosyl-L-homocysteine + 4 H(+). Specifically dimethylates two adjacent adenosines (A1518 and A1519) in the loop of a conserved hairpin near the 3'-end of 16S rRNA in the 30S particle. May play a critical role in biogenesis of 30S subunits. This chain is Ribosomal RNA small subunit methyltransferase A, found in Magnetococcus marinus (strain ATCC BAA-1437 / JCM 17883 / MC-1).